The chain runs to 347 residues: 4-hydroxy-2-oxovalerate aldolase 2 (347 aa).

A Pyruvate carboxyltransferase domain is found at 7 to 259; that stretch reads VRITDTSLRD…KTGIDFFDIA (253 aa). Position 15 to 16 (15 to 16) interacts with substrate; that stretch reads RD. D16 contacts Mn(2+). The active-site Proton acceptor is the H19. S169 and H198 together coordinate substrate. Residues H198 and H200 each coordinate Mn(2+). Y289 contributes to the substrate binding site.

It belongs to the 4-hydroxy-2-oxovalerate aldolase family.

It carries out the reaction (S)-4-hydroxy-2-oxopentanoate = acetaldehyde + pyruvate. The protein is 4-hydroxy-2-oxovalerate aldolase 2 of Mycobacterium ulcerans (strain Agy99).